The following is a 276-amino-acid chain: tRNA (guanine-N(7)-)-methyltransferase (276 aa).

The interval 1–36 is disordered; the sequence is MAAETRNVAGAEAPPPQKRYYRQRAHSNPMADHTLR. A2 carries the N-acetylalanine modification. Phosphoserine; by PKB/AKT1 and RPS6KA3 is present on S27. S-adenosyl-L-homocysteine contacts are provided by G84, E107, I108, R109, N140, A141, and L160. S-adenosyl-L-methionine-binding residues include G84 and E107. Residues R109, N140, A141, and L160 each contribute to the S-adenosyl-L-methionine site. D163 is an active-site residue. The tract at residues 164 to 172 is alphaC helix; the sequence is PHFKRTKHK. The S-adenosyl-L-homocysteine site is built by T238 and E240. S-adenosyl-L-methionine is bound by residues T238 and E240. The interval 238 to 246 is alpha6 helix; it reads TEEGKKVLR.

This sequence belongs to the class I-like SAM-binding methyltransferase superfamily. TrmB family. Catalytic component of the METTL1-WDR4 complex, composed of METTL1 and WDR4. In terms of processing, phosphorylation at Ser-27 by PKB/AKT1 inactivates its methyltransferase activity via a steric interference mechanism in the active site that locally disrupts the catalytic center. Phosphorylation at Ser-27 does not affect the interaction with WDR4. As to expression, ubiquitous.

The protein localises to the nucleus. It catalyses the reaction guanosine(46) in tRNA + S-adenosyl-L-methionine = N(7)-methylguanosine(46) in tRNA + S-adenosyl-L-homocysteine. The enzyme catalyses a guanosine in mRNA + S-adenosyl-L-methionine = an N(7)-methylguanosine in mRNA + S-adenosyl-L-homocysteine. It carries out the reaction a guanosine in miRNA + S-adenosyl-L-methionine = an N(7)-methylguanosine in miRNA + S-adenosyl-L-homocysteine. It participates in tRNA modification; N(7)-methylguanine-tRNA biosynthesis. In terms of biological role, catalytic component of METTL1-WDR4 methyltransferase complex that mediates the formation of N(7)-methylguanine in a subset of RNA species, such as tRNAs, mRNAs and microRNAs (miRNAs). Catalyzes the formation of N(7)-methylguanine at position 46 (m7G46) in a large subset of tRNAs that contain the 5'-RAGGU-3' motif within the variable loop. M7G46 interacts with C13-G22 in the D-loop to stabilize tRNA tertiary structure and protect tRNAs from decay. Also acts as a methyltransferase for a subset of internal N(7)-methylguanine in mRNAs. Internal N(7)-methylguanine methylation of mRNAs in response to stress promotes their relocalization to stress granules, thereby suppressing their translation. Also methylates a specific subset of miRNAs, such as let-7. N(7)-methylguanine methylation of let-7 miRNA promotes let-7 miRNA processing by disrupting an inhibitory secondary structure within the primary miRNA transcript (pri-miRNA). Acts as a regulator of embryonic stem cell self-renewal and differentiation. This chain is tRNA (guanine-N(7)-)-methyltransferase, found in Homo sapiens (Human).